The following is a 218-amino-acid chain: Elongation factor Ts (218 aa).

An involved in Mg(2+) ion dislocation from EF-Tu region spans residues 82-85; it reads TDFV.

It belongs to the EF-Ts family.

Its subcellular location is the cytoplasm. In terms of biological role, associates with the EF-Tu.GDP complex and induces the exchange of GDP to GTP. It remains bound to the aminoacyl-tRNA.EF-Tu.GTP complex up to the GTP hydrolysis stage on the ribosome. This is Elongation factor Ts from Prochlorococcus marinus (strain MIT 9303).